The following is a 564-amino-acid chain: Dihydroxy-acid dehydratase (564 aa).

Residue Asp-80 coordinates Mg(2+). Cys-121 is a [2Fe-2S] cluster binding site. The Mg(2+) site is built by Asp-122 and Lys-123. At Lys-123 the chain carries N6-carboxylysine. Residue Cys-194 participates in [2Fe-2S] cluster binding. Glu-447 serves as a coordination point for Mg(2+). The Proton acceptor role is filled by Ser-473.

This sequence belongs to the IlvD/Edd family. Homodimer. [2Fe-2S] cluster serves as cofactor. The cofactor is Mg(2+).

The enzyme catalyses (2R)-2,3-dihydroxy-3-methylbutanoate = 3-methyl-2-oxobutanoate + H2O. The catalysed reaction is (2R,3R)-2,3-dihydroxy-3-methylpentanoate = (S)-3-methyl-2-oxopentanoate + H2O. It functions in the pathway amino-acid biosynthesis; L-isoleucine biosynthesis; L-isoleucine from 2-oxobutanoate: step 3/4. The protein operates within amino-acid biosynthesis; L-valine biosynthesis; L-valine from pyruvate: step 3/4. Functions in the biosynthesis of branched-chain amino acids. Catalyzes the dehydration of (2R,3R)-2,3-dihydroxy-3-methylpentanoate (2,3-dihydroxy-3-methylvalerate) into 2-oxo-3-methylpentanoate (2-oxo-3-methylvalerate) and of (2R)-2,3-dihydroxy-3-methylbutanoate (2,3-dihydroxyisovalerate) into 2-oxo-3-methylbutanoate (2-oxoisovalerate), the penultimate precursor to L-isoleucine and L-valine, respectively. The chain is Dihydroxy-acid dehydratase from Listeria welshimeri serovar 6b (strain ATCC 35897 / DSM 20650 / CCUG 15529 / CIP 8149 / NCTC 11857 / SLCC 5334 / V8).